We begin with the raw amino-acid sequence, 169 residues long: S-ribosylhomocysteine lyase (169 aa).

Residues His54, His58, and Cys128 each coordinate Fe cation.

It belongs to the LuxS family. As to quaternary structure, homodimer. It depends on Fe cation as a cofactor.

It catalyses the reaction S-(5-deoxy-D-ribos-5-yl)-L-homocysteine = (S)-4,5-dihydroxypentane-2,3-dione + L-homocysteine. Functionally, involved in the synthesis of autoinducer 2 (AI-2) which is secreted by bacteria and is used to communicate both the cell density and the metabolic potential of the environment. The regulation of gene expression in response to changes in cell density is called quorum sensing. Catalyzes the transformation of S-ribosylhomocysteine (RHC) to homocysteine (HC) and 4,5-dihydroxy-2,3-pentadione (DPD). This chain is S-ribosylhomocysteine lyase, found in Shewanella sp. (strain MR-4).